Here is a 1778-residue protein sequence, read N- to C-terminus: MVFQSFILGNLVSLCMKIINSVVVVGLYYGFLTTFSIGPSYLFLLRARVMDEGEEGTEKKVSATTGFIAGQLMMFISIYYAPLHLALGRPHTITVLALPYLLFHFFWNNNKHFFDYGSTTRNEMRNLRIQCVFLNNLIFQLFNHFILPSSMLARLVNIYMFRCNNKMLFVTSSFVGWLIGHILFMKWVGLVLVWIQQNNSIRSNVLIRSNKYKFLVSELRNSMARIFSILLFITCVYYLGRIPSPIFTKKLKGTSETGGTKQDPEVSTEEAPFRSLFSEEREDLDKIDEMEEIRVNGKEKINKDDEFHVRTYYNYKTVSENRDGNKENSNLKFLKIKEDPFFFLWFEKPFVTLVFDYKRWNRPNRYIKNDKIENTVRNEMSQYFFYTCQSDGKERISFTYPPNLSTFFEMIQKKISSFTRAKAPSDQVYAYWSLLNEKKKENLKNEFLNRIEALDLDKERSFENILEKTTRFCHNETKKEYLPKLYDPFLHGISRGKIKKLLPFKKITDINIGIGGSWINKIHGILLRINSHKFEQTIEKFTRKSLSIEKKLSFFSEPQEEKINSEEEIKIFKFLFDVVITDNNNKTLIKNFIDFHEINKNVPRWSYKLTSELEELEGENEENVPTEPGIRSRKAKSVVVFTDKEPHNGIFTNLKDNQNSDQKDEMALIRYSQHSDFRRDLIKGSMRSQRRKTVIWDFFQAKVHSPLFFDRIDKLFFFSFDFWGLKKKIIRNFMWKKKKKEFLKKEDEQSKRKETRRIEIAETWDSFPFSQIIRGSLLVTQSILRKYIILPLLIIIKNSTRALLFQVPEWSEDLKDWKREMHVKCTYNGVQLSETEFPRNWLTDGIQIKILFPFYLKPWHKLKVQSSQKARLKKIKDKGEKTDFGFLTVWGMETELPFGSAKKKRSFFEPIFKELKKRIKKFKTKPFRVLSIFKERATIFLKVTKERKNWIIKNLLFRKGKRKNISKQNIIPLFGVREIDELNETKKDSIMSNQMIYELSGQKKSMEWPNSSLNENKIKNLIDRIKIIKNQTEEISKEKENLTNRCNKPRYDSQIIASSKKRWQAFKRKNIRLIRKSFFFFKFCIEQLSITFFLGIINIPRITTQLQLFFESTKTILDKYIYKNEENGEKKKNQKNTIYFISTLKNLISKNKKFSYDLCSLSQAYVFYKLSQIQVSNFSKLKAVLEYNICITSFFVKNQIKDFCQEQGIFHYELKDKTFFNSEVNPWKYWLRSHSQYNLPWIAWARLVTQKWKKKINQDFLVLNTSLIKTDLYEKNKIDNYKKQQFFEANSLLNSKHNLKKDYIYNSFCYRSIHSREKKFDMSMSIGITPDNCLVSSFLEKYNIQVIGEIGHRKYLDWRILNFWFRKKVNIGLLIDTKSKKKYIKTKVQNYKKIDKITKTDLANQKSFFFDWMGMNEERLNHRITNFAFFFFSEFFLFSSTYKTKPWVIPIKLLLFNFNEKKNVNKKITLKKKGFIPSNEKGPLRFFNLNKEENELVGQGELESDNEKKRNPESALSNQEKNIEKNYAESKIKKRQNKKQYKSHTEAELYLFLTRYSRFQLRWNCFFNQKILNNIKVYCLLVRLKNPNEIAISSIERGELSLDILMIEKNFTFSKLMKKGILIIEPVRLSVKNDGQLIIYRTVGISLVHKNKQKISKRYKKKSYIDKKNNYDFFIPENILSPKRRREFRILICFNLKKKNARDRNSRFDKNIQNLTTVLHKKKDLYKDKKTLIKLKSFLWPNFRLEDLACMNRYWFNTTNGNHFSMIRIHMYARFQIR.

6 consecutive transmembrane segments (helical) span residues 18–38 (IINS…FSIG), 67–87 (FIAG…HLAL), 90–110 (PHTI…WNNN), 132–152 (VFLN…SSML), 175–195 (VGWL…LVWI), and 226–246 (IFSI…PSPI). Residues 1498–1520 (GQGELESDNEKKRNPESALSNQE) form a disordered region.

The protein belongs to the TIC214 family. As to quaternary structure, part of the Tic complex.

The protein localises to the plastid. Its subcellular location is the chloroplast inner membrane. Functionally, involved in protein precursor import into chloroplasts. May be part of an intermediate translocation complex acting as a protein-conducting channel at the inner envelope. The polypeptide is Protein TIC 214 (Arabis hirsuta (Hairy rock-cress)).